The sequence spans 733 residues: Arginine decarboxylase 1A, chloroplastic (733 aa).

The transit peptide at 1-44 directs the protein to the chloroplast; it reads MPALGCCVDAAVSPPPGYSFLWDSSLPAPEIFPSGVPPSTNTAV. Lys-157 is subject to N6-(pyridoxal phosphate)lysine. Pyridoxal 5'-phosphate contacts are provided by residues Ser-309, Gly-346, and 395–398; that span reads ESGR. 460–461 lines the substrate pocket; sequence YA. The Proton donor; shared with dimeric partner role is filled by Cys-548. Asp-549 is a binding site for substrate. Tyr-592 is a pyridoxal 5'-phosphate binding site.

The protein belongs to the Orn/Lys/Arg decarboxylase class-II family. SpeA subfamily. As to quaternary structure, interacts, via its C-terminal internal region, with the tobacco mosaic virus (TMV) replicase helicase region. Mg(2+) serves as cofactor. It depends on pyridoxal 5'-phosphate as a cofactor.

It localises to the plastid. The protein localises to the chloroplast. It carries out the reaction L-arginine + H(+) = agmatine + CO2. It functions in the pathway alkaloid biosynthesis; nicotine biosynthesis. It participates in amine and polyamine biosynthesis; agmatine biosynthesis; agmatine from L-arginine: step 1/1. Involved in the biosynthesis of pyridine alkaloid natural products, leading mainly to the production of anabasine, anatabine, nicotine and nornicotine, effective deterrents against herbivores with antiparasitic and pesticide properties (neurotoxins); nornicotine serves as the precursor in the synthesis of the carcinogen compound N'-nitrosonornicotine (NNN). Required for the biosynthesis of putrescine. Catalyzes the first step of polyamine (PA) biosynthesis to produce putrescine from arginine. The protein is Arginine decarboxylase 1A, chloroplastic of Nicotiana tabacum (Common tobacco).